A 252-amino-acid polypeptide reads, in one-letter code: Chitooligosaccharide deacetylase (252 aa).

2 residues coordinate Mg(2+): His-61 and His-125.

The protein belongs to the YdjC deacetylase family. ChbG subfamily. Homodimer. Mg(2+) serves as cofactor.

It is found in the cytoplasm. It catalyses the reaction N,N'-diacetylchitobiose + H2O = N-acetyl-beta-D-glucosaminyl-(1-&gt;4)-D-glucosamine + acetate. The enzyme catalyses diacetylchitobiose-6'-phosphate + H2O = N'-monoacetylchitobiose-6'-phosphate + acetate. It functions in the pathway glycan degradation; chitin degradation. Functionally, involved in the degradation of chitin. ChbG is essential for growth on the acetylated chitooligosaccharides chitobiose and chitotriose but is dispensable for growth on cellobiose and chitosan dimer, the deacetylated form of chitobiose. Deacetylation of chitobiose-6-P and chitotriose-6-P is necessary for both the activation of the chb promoter by the regulatory protein ChbR and the hydrolysis of phosphorylated beta-glucosides by the phospho-beta-glucosidase ChbF. Catalyzes the removal of only one acetyl group from chitobiose-6-P to yield monoacetylchitobiose-6-P, the inducer of ChbR and the substrate of ChbF. The protein is Chitooligosaccharide deacetylase of Escherichia coli O8 (strain IAI1).